A 271-amino-acid chain; its full sequence is Putative two-component membrane permease complex subunit SMU_746c (271 aa).

The next 2 membrane-spanning stretches (helical) occupy residues 34–54 (LAYI…TIWM) and 70–90 (FFSP…PTVP).

The protein belongs to the UPF0703 family. In terms of assembly, interacts with SMU_747c.

The protein localises to the cell membrane. Functionally, could be part of a two-component membrane permease system responsible for amino acid transport under low pH. Involved in acidogenesis, biofilm formation and low-pH survival. This Streptococcus mutans serotype c (strain ATCC 700610 / UA159) protein is Putative two-component membrane permease complex subunit SMU_746c.